Here is a 218-residue protein sequence, read N- to C-terminus: MDAIVTFFQENGHNLLVQTWQHLFISLSAVILGIAVAVPTGILLTRSPKVANFVIGVVSVLQTVPSLAILAFIIPFLGVGTLPAIIALFIYALLPILRNTFIGVRGVDKNLIESGRGMGMTNWQLIVNVEIPNSISVIMAGIRLSAVYVIAWATLASYIGAGGLGDFIFNGLNLYRPDLILGGAIPVTILALVVEFALGKLEYRLTPKAIREAREGGE.

Residues 19 to 198 (TWQHLFISLS…ILALVVEFAL (180 aa)) enclose the ABC transmembrane type-1 domain. The next 5 helical transmembrane spans lie at 23-43 (LFISLSAVILGIAVAVPTGIL), 48-68 (PKVANFVIGVVSVLQTVPSLA), 79-101 (VGTLPAIIALFIYALLPILRNTF), 149-169 (VIAWATLASYIGAGGLGDFIF), and 179-199 (LILGGAIPVTILALVVEFALG).

Belongs to the binding-protein-dependent transport system permease family. The complex is composed of two ATP-binding proteins (OpuCA), two transmembrane proteins (OpuCB and OpuCD) and a solute-binding protein (OpuCC).

The protein resides in the cell membrane. Its function is as follows. Part of the ABC transporter complex OpuCABCD involved in carnitine uptake. Probably responsible for the translocation of the substrate across the membrane. Involved, with BetL and GbuABC, in osmoprotection and cryoprotection of Listeria. In Listeria monocytogenes, this protein is Carnitine transport permease protein OpuCB (opuCB).